The sequence spans 553 residues: Dihydroxy-acid dehydratase (553 aa).

Asp-78 lines the Mg(2+) pocket. Residue Cys-119 coordinates [2Fe-2S] cluster. Residues Asp-120 and Lys-121 each contribute to the Mg(2+) site. Position 121 is an N6-carboxylysine (Lys-121). Cys-193 contacts [2Fe-2S] cluster. Glu-441 contributes to the Mg(2+) binding site. The active-site Proton acceptor is Ser-467.

This sequence belongs to the IlvD/Edd family. Homodimer. The cofactor is [2Fe-2S] cluster. Requires Mg(2+) as cofactor.

It carries out the reaction (2R)-2,3-dihydroxy-3-methylbutanoate = 3-methyl-2-oxobutanoate + H2O. The enzyme catalyses (2R,3R)-2,3-dihydroxy-3-methylpentanoate = (S)-3-methyl-2-oxopentanoate + H2O. It functions in the pathway amino-acid biosynthesis; L-isoleucine biosynthesis; L-isoleucine from 2-oxobutanoate: step 3/4. It participates in amino-acid biosynthesis; L-valine biosynthesis; L-valine from pyruvate: step 3/4. Functionally, functions in the biosynthesis of branched-chain amino acids. Catalyzes the dehydration of (2R,3R)-2,3-dihydroxy-3-methylpentanoate (2,3-dihydroxy-3-methylvalerate) into 2-oxo-3-methylpentanoate (2-oxo-3-methylvalerate) and of (2R)-2,3-dihydroxy-3-methylbutanoate (2,3-dihydroxyisovalerate) into 2-oxo-3-methylbutanoate (2-oxoisovalerate), the penultimate precursor to L-isoleucine and L-valine, respectively. This Trichlorobacter lovleyi (strain ATCC BAA-1151 / DSM 17278 / SZ) (Geobacter lovleyi) protein is Dihydroxy-acid dehydratase.